The chain runs to 59 residues: Insulin (59 aa).

Intrachain disulfides connect C7–C45, C19–C58, and C44–C49.

Belongs to the insulin family. As to quaternary structure, heterodimer of a B chain and an A chain linked by two disulfide bonds.

Its subcellular location is the secreted. Its function is as follows. Insulin decreases blood glucose concentration. It increases cell permeability to monosaccharides, amino acids and fatty acids. It accelerates glycolysis, the pentose phosphate cycle, and glycogen synthesis in liver. This chain is Insulin (ins), found in Chimaera monstrosa (Rabbit fish).